A 78-amino-acid polypeptide reads, in one-letter code: Protein FAM240B (78 aa).

This sequence belongs to the FAM240 family.

The protein is Protein FAM240B of Homo sapiens (Human).